Consider the following 299-residue polypeptide: Ethylmalonyl-CoA decarboxylase (299 aa).

Lysine 209 carries the N6-acetyllysine; alternate modification. Residue lysine 209 is modified to N6-succinyllysine; alternate. The residue at position 293 (lysine 293) is an N6-succinyllysine.

Belongs to the enoyl-CoA hydratase/isomerase family.

Its subcellular location is the cytoplasm. It localises to the cytosol. The catalysed reaction is (2S)-ethylmalonyl-CoA + H(+) = butanoyl-CoA + CO2. It carries out the reaction (S)-methylmalonyl-CoA + H(+) = propanoyl-CoA + CO2. The enzyme catalyses (2R)-ethylmalonyl-CoA + H(+) = butanoyl-CoA + CO2. Functionally, decarboxylates ethylmalonyl-CoA, a potentially toxic metabolite, to form butyryl-CoA, suggesting it might be involved in metabolite proofreading. Acts preferentially on (S)-ethylmalonyl-CoA but also has some activity on the (R)-isomer. Also has methylmalonyl-CoA decarboxylase activity at lower level. This Rattus norvegicus (Rat) protein is Ethylmalonyl-CoA decarboxylase (Echdc1).